The sequence spans 311 residues: Prohibitin-2 (311 aa).

Residues 39-57 form a helical membrane-spanning segment; sequence GAGMGLAGLVLLGGAAFVA. The AIM motif lies at 141 to 144; sequence YRTL.

Belongs to the prohibitin family. As to quaternary structure, the mitochondrial prohibitin complex consists of two subunits (PHB1 and PHB2). The subunits assemble into a membrane-associated ring-shaped supercomplex of approximately 1 mDa. Interacts with ATG24/SNX4; the interaction is direct and plays a role in mitophagy.

Its subcellular location is the mitochondrion inner membrane. Its function is as follows. Prohibitin probably acts as a holdase/unfoldase for the stabilization of newly synthesized mitochondrial proteins. Involved in mitophagy. Required for the switch to necrotrophic growth. This chain is Prohibitin-2, found in Colletotrichum higginsianum (strain IMI 349063) (Crucifer anthracnose fungus).